The following is a 163-amino-acid chain: Nucleotide-binding protein CYA_0935 (163 aa).

The protein belongs to the YajQ family.

Functionally, nucleotide-binding protein. The polypeptide is Nucleotide-binding protein CYA_0935 (Synechococcus sp. (strain JA-3-3Ab) (Cyanobacteria bacterium Yellowstone A-Prime)).